Consider the following 168-residue polypeptide: GTP-dependent dephospho-CoA kinase (168 aa).

GTP contacts are provided by Asp-40, Val-41, Val-42, Asp-59, and Glu-112.

The protein belongs to the GTP-dependent DPCK family.

It catalyses the reaction 3'-dephospho-CoA + GTP = GDP + CoA + H(+). The protein operates within cofactor biosynthesis; coenzyme A biosynthesis. In terms of biological role, catalyzes the GTP-dependent phosphorylation of the 3'-hydroxyl group of dephosphocoenzyme A to form coenzyme A (CoA). The protein is GTP-dependent dephospho-CoA kinase of Methanoregula boonei (strain DSM 21154 / JCM 14090 / 6A8).